The primary structure comprises 695 residues: Polyribonucleotide nucleotidyltransferase (695 aa).

Positions 486 and 492 each coordinate Mg(2+). The KH domain maps to 553-612 (PRIETMQINTSKIATVIGPGGKQIRQIIERSGAQVDINDDGVINIAASTQESINKAKELI). The 69-residue stretch at 622 to 690 (GKVYNGRVTS…EKGQLKLSHK (69 aa)) folds into the S1 motif domain.

It belongs to the polyribonucleotide nucleotidyltransferase family. Mg(2+) is required as a cofactor.

It is found in the cytoplasm. The enzyme catalyses RNA(n+1) + phosphate = RNA(n) + a ribonucleoside 5'-diphosphate. Functionally, involved in mRNA degradation. Catalyzes the phosphorolysis of single-stranded polyribonucleotides processively in the 3'- to 5'-direction. This Chlamydia trachomatis serovar D (strain ATCC VR-885 / DSM 19411 / UW-3/Cx) protein is Polyribonucleotide nucleotidyltransferase.